The following is a 155-amino-acid chain: Large ribosomal subunit protein uL30 (155 aa).

Belongs to the universal ribosomal protein uL30 family. Part of the 50S ribosomal subunit.

The sequence is that of Large ribosomal subunit protein uL30 from Cenarchaeum symbiosum (strain A).